The chain runs to 615 residues: DNA mismatch repair protein MutL (615 aa).

The protein belongs to the DNA mismatch repair MutL/HexB family.

In terms of biological role, this protein is involved in the repair of mismatches in DNA. It is required for dam-dependent methyl-directed DNA mismatch repair. May act as a 'molecular matchmaker', a protein that promotes the formation of a stable complex between two or more DNA-binding proteins in an ATP-dependent manner without itself being part of a final effector complex. The chain is DNA mismatch repair protein MutL from Parabacteroides distasonis (strain ATCC 8503 / DSM 20701 / CIP 104284 / JCM 5825 / NCTC 11152).